The primary structure comprises 732 residues: E3 ubiquitin-protein ligase TRIM56 (732 aa).

Residues 21–60 form an RING-type zinc finger; sequence CKICLEQLRVPKTLPCLHTYCQDCLAQLAEGSRLRCPECR. Residues 164–205 form a B box-type zinc finger; the sequence is RQAAQCPQHPGEALRFLCQPCSQLLCRECRLDPHLDHPCLPL. The Zn(2+) site is built by Cys169, His172, Cys192, and His197. Residues 211 to 286 are a coiled coil; sequence ARRPGLEELL…LRAHVEAAEE (76 aa). A compositionally biased stretch (basic and acidic residues) spans 374 to 384; sequence LPQKDSGKDGA. Residues 374–462 are disordered; it reads LPQKDSGKDG…PAPGPNLEGS (89 aa). Over residues 389-405 the composition is skewed to polar residues; sequence GDATQPQSRDGVQTPNQ. Phosphothreonine is present on Thr402. Positions 407–416 are enriched in basic and acidic residues; sequence DGAKTPKESR. Thr419 is subject to Phosphothreonine. Over residues 434 to 446 the composition is skewed to basic residues; it reads SNKKRKFKGRLKS. The residue at position 452 (Ser452) is a Phosphoserine.

The protein belongs to the TRIM/RBCC family. Interacts with STING1. Interacts with TICAM1.

Its subcellular location is the cytoplasm. It carries out the reaction S-ubiquitinyl-[E2 ubiquitin-conjugating enzyme]-L-cysteine + [acceptor protein]-L-lysine = [E2 ubiquitin-conjugating enzyme]-L-cysteine + N(6)-ubiquitinyl-[acceptor protein]-L-lysine.. The protein operates within protein modification; protein ubiquitination. Functionally, E3 ubiquitin-protein ligase that plays a key role in innate antiviral immunity by mediating ubiquitination of CGAS and STING1. In response to pathogen- and host-derived double-stranded DNA (dsDNA), targets STING1 to 'Lys-63'-linked ubiquitination, thereby promoting its homodimerization, a step required for the production of type I interferon IFN-beta. Also mediate monoubiquitination of CGAS, thereby promoting CGAS oligomerization and subsequent activation. Independently of its E3 ubiquitin ligase activity, positive regulator of TLR3 signaling. Potentiates extracellular double stranded RNA (dsRNA)-induced expression of IFNB1 and interferon-stimulated genes ISG15, IFIT1/ISG56, CXCL10, OASL and CCL5/RANTES. Restricts bovine viral diarrhea virus (BVDV) replication. In Bos taurus (Bovine), this protein is E3 ubiquitin-protein ligase TRIM56.